Reading from the N-terminus, the 164-residue chain is Choriogonadotropin subunit beta (164 aa).

An N-terminal signal peptide occupies residues 1-20 (MEMLQGLLLCLLLSTGGAWA). Cystine bridges form between C29/C77, C43/C92, C46/C130, C54/C108, C58/C110, and C113/C120. N50 carries N-linked (GlcNAc...) asparagine glycosylation. The tract at residues 133 to 164 (HTSQDSSSKDPPRNLTSPSQLPEPADAPLVPQ) is disordered. O-linked (GalNAc...) serine glycosylation occurs at S140. N-linked (GlcNAc...) asparagine glycosylation is present at N146. The O-linked (GalNAc...) serine glycan is linked to S151.

Belongs to the glycoprotein hormones subunit beta family. Heterodimer of a common alpha chain and a unique beta chain which confers biological specificity to thyrotropin, lutropin, follitropin and gonadotropin.

It is found in the secreted. Stimulates the ovaries to synthesize the steroids that are essential for the maintenance of pregnancy. The protein is Choriogonadotropin subunit beta (CGB) of Aotus nancymaae (Ma's night monkey).